Reading from the N-terminus, the 209-residue chain is COP9 signalosome complex subunit 8 (209 aa).

The PCI domain maps to glutamate 8 to phenylalanine 179. Serine 175 bears the Phosphoserine mark.

Belongs to the CSN8 family. In terms of assembly, component of the CSN complex, composed of COPS1/GPS1, COPS2, COPS3, COPS4, COPS5, COPS6, COPS7 (COPS7A or COPS7B), COPS8 and COPS9 isoform 1. In the complex, it probably interacts directly with COPS3, COPS4 and COPS7 (COPS7A or COPS7B).

The protein resides in the cytoplasm. The protein localises to the nucleus. Its function is as follows. Component of the COP9 signalosome complex (CSN), a complex involved in various cellular and developmental processes. The CSN complex is an essential regulator of the ubiquitin (Ubl) conjugation pathway by mediating the deneddylation of the cullin subunits of SCF-type E3 ligase complexes, leading to decrease the Ubl ligase activity of SCF-type complexes such as SCF, CSA or DDB2. The complex is also involved in phosphorylation of p53/TP53, c-jun/JUN, IkappaBalpha/NFKBIA, ITPK1 and IRF8/ICSBP, possibly via its association with CK2 and PKD kinases. CSN-dependent phosphorylation of TP53 and JUN promotes and protects degradation by the Ubl system, respectively. This is COP9 signalosome complex subunit 8 (COPS8) from Homo sapiens (Human).